A 238-amino-acid polypeptide reads, in one-letter code: Ribonuclease PH (238 aa).

Phosphate is bound by residues Arg-86 and 124 to 126 (GTR).

This sequence belongs to the RNase PH family. In terms of assembly, homohexameric ring arranged as a trimer of dimers.

It carries out the reaction tRNA(n+1) + phosphate = tRNA(n) + a ribonucleoside 5'-diphosphate. Functionally, phosphorolytic 3'-5' exoribonuclease that plays an important role in tRNA 3'-end maturation. Removes nucleotide residues following the 3'-CCA terminus of tRNAs; can also add nucleotides to the ends of RNA molecules by using nucleoside diphosphates as substrates, but this may not be physiologically important. Probably plays a role in initiation of 16S rRNA degradation (leading to ribosome degradation) during starvation. This Nitrosospira multiformis (strain ATCC 25196 / NCIMB 11849 / C 71) protein is Ribonuclease PH.